We begin with the raw amino-acid sequence, 323 residues long: Prenyl transferase (323 aa).

Positions 46, 49, and 81 each coordinate isopentenyl diphosphate. Mg(2+)-binding residues include D88 and D92. R97 serves as a coordination point for an all-trans-polyprenyl diphosphate. Position 98 (R98) interacts with isopentenyl diphosphate. The an all-trans-polyprenyl diphosphate site is built by K174, T175, and Q212.

It belongs to the FPP/GGPP synthase family. It depends on Mg(2+) as a cofactor.

It is found in the plastid. The protein localises to the cyanelle. Functionally, possible role in synthesis of the nonaprenyl side chain of plastoquinone or in synthesis of other prenyl chains such as undekaprenyl pyrophosphate. In Cyanophora paradoxa, this protein is Prenyl transferase (preA).